The following is a 793-amino-acid chain: Nuclear cap-binding protein subunit 1 (793 aa).

Residues Glu-28–Arg-242 form the MIF4G domain.

Belongs to the NCBP1 family. In terms of assembly, component of the nuclear cap-binding complex (CBC), a heterodimer composed of ncbp-1 and ncbp-1 that interacts with m7GpppG-capped RNA.

The protein resides in the nucleus. Its function is as follows. Component of the cap-binding complex (CBC), which binds cotranscriptionally to the 5'-cap of pre-mRNAs and is involved in various processes such as pre-mRNA splicing and RNA-mediated gene silencing (RNAi). The CBC complex is involved in miRNA-mediated RNA interference and is required for primary microRNAs (miRNAs) processing. In the CBC complex, ncbp-1 does not bind directly capped RNAs (m7GpppG-capped RNA) but is required to stabilize the movement of the N-terminal loop of ncbp-2 and lock the CBC into a high affinity cap-binding state with the cap structure. The polypeptide is Nuclear cap-binding protein subunit 1 (ncbp-1) (Caenorhabditis briggsae).